The primary structure comprises 322 residues: Phosphatidylserine decarboxylase proenzyme (322 aa).

Active-site charge relay system; for autoendoproteolytic cleavage activity residues include D90, H147, and S254. S254 (schiff-base intermediate with substrate; via pyruvic acid; for decarboxylase activity) is an active-site residue. S254 bears the Pyruvic acid (Ser); by autocatalysis mark. Residues 295 to 322 are disordered; that stretch reads VEPAPLPTEEIKAEHDASPLVDNKKDDT. The span at 303–322 shows a compositional bias: basic and acidic residues; sequence EEIKAEHDASPLVDNKKDDT.

Belongs to the phosphatidylserine decarboxylase family. PSD-B subfamily. Prokaryotic type I sub-subfamily. In terms of assembly, heterodimer of a large membrane-associated beta subunit and a small pyruvoyl-containing alpha subunit. Pyruvate is required as a cofactor. Is synthesized initially as an inactive proenzyme. Formation of the active enzyme involves a self-maturation process in which the active site pyruvoyl group is generated from an internal serine residue via an autocatalytic post-translational modification. Two non-identical subunits are generated from the proenzyme in this reaction, and the pyruvate is formed at the N-terminus of the alpha chain, which is derived from the carboxyl end of the proenzyme. The autoendoproteolytic cleavage occurs by a canonical serine protease mechanism, in which the side chain hydroxyl group of the serine supplies its oxygen atom to form the C-terminus of the beta chain, while the remainder of the serine residue undergoes an oxidative deamination to produce ammonia and the pyruvoyl prosthetic group on the alpha chain. During this reaction, the Ser that is part of the protease active site of the proenzyme becomes the pyruvoyl prosthetic group, which constitutes an essential element of the active site of the mature decarboxylase.

The protein localises to the cell membrane. The catalysed reaction is a 1,2-diacyl-sn-glycero-3-phospho-L-serine + H(+) = a 1,2-diacyl-sn-glycero-3-phosphoethanolamine + CO2. Its pathway is phospholipid metabolism; phosphatidylethanolamine biosynthesis; phosphatidylethanolamine from CDP-diacylglycerol: step 2/2. In terms of biological role, catalyzes the formation of phosphatidylethanolamine (PtdEtn) from phosphatidylserine (PtdSer). The chain is Phosphatidylserine decarboxylase proenzyme from Salmonella agona (strain SL483).